A 233-amino-acid chain; its full sequence is Large ribosomal subunit protein uL1 (233 aa).

Belongs to the universal ribosomal protein uL1 family. As to quaternary structure, part of the 50S ribosomal subunit.

Its function is as follows. Binds directly to 23S rRNA. The L1 stalk is quite mobile in the ribosome, and is involved in E site tRNA release. Functionally, protein L1 is also a translational repressor protein, it controls the translation of the L11 operon by binding to its mRNA. In Polynucleobacter asymbioticus (strain DSM 18221 / CIP 109841 / QLW-P1DMWA-1) (Polynucleobacter necessarius subsp. asymbioticus), this protein is Large ribosomal subunit protein uL1.